The following is a 553-amino-acid chain: Putative transport protein YidE (553 aa).

5 helical membrane-spanning segments follow: residues 4 to 24 (IALT…IGNV), 28 to 48 (GIGL…HFVS), 65 to 85 (FGLI…FFAS), 95 to 115 (LFAV…HKLF), and 158 to 178 (MSYA…MWML). RCK C-terminal domains are found at residues 191 to 276 (QQHE…VIGQ) and 279 to 361 (DTSL…VLGN). Transmembrane regions (helical) follow at residues 371-391 (MLPV…PVFV), 393-413 (GFPA…ALIL), 439-459 (IVLF…NTLV), 464-484 (LSWI…VGIL), 493-513 (YLTM…LAFA), and 533-553 (LVMF…WSIG).

Belongs to the AAE transporter (TC 2.A.81) family. YidE subfamily.

Its subcellular location is the cell membrane. In Shigella boydii serotype 4 (strain Sb227), this protein is Putative transport protein YidE.